A 180-amino-acid chain; its full sequence is O-acetyl-ADP-ribose deacetylase (180 aa).

One can recognise a Macro domain in the interval 1 to 175; the sequence is MKPQIDVIHG…LYQRLLTQRG (175 aa). Residues 11–12, Asn-25, 33–35, and 122–126 each bind substrate; these read DI, GVD, and STGVY. Asp-35 acts as the Proton acceptor in catalysis.

The protein belongs to the MacroD-type family. YmdB subfamily. As to quaternary structure, homodimer. Interacts with RNase III.

The catalysed reaction is 3''-O-acetyl-ADP-D-ribose + H2O = ADP-D-ribose + acetate + H(+). It carries out the reaction 2''-O-acetyl-ADP-D-ribose + H2O = ADP-D-ribose + acetate + H(+). In terms of biological role, deacetylates O-acetyl-ADP ribose to yield ADP-ribose and free acetate. Down-regulates ribonuclease 3 (RNase III) activity. Acts by interacting directly with the region of the ribonuclease that is required for dimerization/activation. The sequence is that of O-acetyl-ADP-ribose deacetylase from Enterobacter cloacae subsp. cloacae (strain ATCC 13047 / DSM 30054 / NBRC 13535 / NCTC 10005 / WDCM 00083 / NCDC 279-56).